Here is a 176-residue protein sequence, read N- to C-terminus: Ribosome maturation factor RimP (176 aa).

The protein belongs to the RimP family.

The protein localises to the cytoplasm. Functionally, required for maturation of 30S ribosomal subunits. This is Ribosome maturation factor RimP from Mycolicibacterium vanbaalenii (strain DSM 7251 / JCM 13017 / BCRC 16820 / KCTC 9966 / NRRL B-24157 / PYR-1) (Mycobacterium vanbaalenii).